Here is a 113-residue protein sequence, read N- to C-terminus: Ig heavy chain V-III region T957 (113 aa).

The Ig-like domain maps to 1–113 (EVKLEESGGG…YWGQGTLVTV (113 aa)). C22 and C98 are disulfide-bonded.

The sequence is that of Ig heavy chain V-III region T957 from Mus musculus (Mouse).